The chain runs to 877 residues: Alpha-glucosidase (877 aa).

A signal peptide spans 1-23 (MATVGVLLLCLCLCLFAPRLCSS). The tract at residues 89–115 (VPQDIIPRPAPGDVLHDAPPASSAPLQ) is disordered. 4 N-linked (GlcNAc...) asparagine glycosylation sites follow: Asn-191, Asn-298, Asn-338, and Asn-391. Active-site residues include Asp-437 and Glu-440. N-linked (GlcNAc...) asparagine glycosylation is present at Asn-471. Residue Asp-534 is the Proton donor of the active site. An N-linked (GlcNAc...) asparagine glycan is attached at Asn-570.

Belongs to the glycosyl hydrolase 31 family. As to expression, high levels seen in the aleurone and scutellum after germination, while low levels are found in developing seeds.

The enzyme catalyses Hydrolysis of terminal, non-reducing (1-&gt;4)-linked alpha-D-glucose residues with release of alpha-D-glucose.. This Hordeum vulgare (Barley) protein is Alpha-glucosidase.